A 396-amino-acid chain; its full sequence is Acetate kinase (396 aa).

Asn7 lines the Mg(2+) pocket. Lys14 is an ATP binding site. A substrate-binding site is contributed by Arg86. Residue Asp143 is the Proton donor/acceptor of the active site. ATP is bound by residues 203–207 (HLGNG), 277–279 (DMR), and 325–329 (GIGEH). Glu380 is a binding site for Mg(2+).

It belongs to the acetokinase family. In terms of assembly, homodimer. Mg(2+) serves as cofactor. Requires Mn(2+) as cofactor.

The protein localises to the cytoplasm. It carries out the reaction acetate + ATP = acetyl phosphate + ADP. Its pathway is metabolic intermediate biosynthesis; acetyl-CoA biosynthesis; acetyl-CoA from acetate: step 1/2. Its function is as follows. Catalyzes the formation of acetyl phosphate from acetate and ATP. Can also catalyze the reverse reaction. The sequence is that of Acetate kinase from Sulfurovum sp. (strain NBC37-1).